Here is a 347-residue protein sequence, read N- to C-terminus: MVNVDTKLLVIFVELLSKRNATYVAEKMHMTAPAVSHSLGRLREIFDDPLFIRVPHGLTPTPKALELGPKVREMLDLWAAINEGDIATFDPLEAAGTFNISFAGTLGDALFDRFLLRVKRLAPGLQVRLTESSSWEADVAAMRSNELDLAFSPFPTRHPEIVEEVVTSFNMWVCARKDHPVLKDHCSLDQYLECEHIFIAQGNPGTRAAPSLIPLDYALQQRGLKRHSTMTVHAWRTQAEVAAQTDMIFTVNSLMKDLVCETYNLNAFPLPSELETVLGLNMLWHRSRNTHPMLVWARNLFKQVVAEYTGKASIAPMHPPMLTDDSGKSGKTGKGDAEKEDESRLSV.

The HTH lysR-type domain maps to 1 to 61; the sequence is MVNVDTKLLV…IRVPHGLTPT (61 aa). Positions 21–40 form a DNA-binding region, H-T-H motif; sequence ATYVAEKMHMTAPAVSHSLG. The disordered stretch occupies residues 316 to 347; the sequence is PMHPPMLTDDSGKSGKTGKGDAEKEDESRLSV. Basic and acidic residues predominate over residues 325-347; that stretch reads DSGKSGKTGKGDAEKEDESRLSV.

This sequence belongs to the LysR transcriptional regulatory family.

Functionally, regulates the transcription of one or more of the genes involved in virulence. The polypeptide is HTH-type transcriptional regulator PhcA (phcA) (Ralstonia nicotianae (strain ATCC BAA-1114 / GMI1000) (Ralstonia solanacearum)).